We begin with the raw amino-acid sequence, 841 residues long: DNA ligase (841 aa).

NAD(+)-binding positions include 33–37 (DAQYD), 82–83 (SL), and Glu114. Residue Lys116 is the N6-AMP-lysine intermediate of the active site. NAD(+) is bound by residues Arg137, Glu174, Lys300, and Lys324. Zn(2+)-binding residues include Cys418, Cys421, Cys436, and Cys442. One can recognise a BRCT domain in the interval 758–841 (EKTGPLDGQT…AFLGEHGQQR (84 aa)).

Belongs to the NAD-dependent DNA ligase family. LigA subfamily. It depends on Mg(2+) as a cofactor. The cofactor is Mn(2+).

The catalysed reaction is NAD(+) + (deoxyribonucleotide)n-3'-hydroxyl + 5'-phospho-(deoxyribonucleotide)m = (deoxyribonucleotide)n+m + AMP + beta-nicotinamide D-nucleotide.. Functionally, DNA ligase that catalyzes the formation of phosphodiester linkages between 5'-phosphoryl and 3'-hydroxyl groups in double-stranded DNA using NAD as a coenzyme and as the energy source for the reaction. It is essential for DNA replication and repair of damaged DNA. The protein is DNA ligase of Xanthomonas oryzae pv. oryzae (strain KACC10331 / KXO85).